A 261-amino-acid chain; its full sequence is Indole-3-glycerol phosphate synthase (261 aa).

Belongs to the TrpC family.

It carries out the reaction 1-(2-carboxyphenylamino)-1-deoxy-D-ribulose 5-phosphate + H(+) = (1S,2R)-1-C-(indol-3-yl)glycerol 3-phosphate + CO2 + H2O. The protein operates within amino-acid biosynthesis; L-tryptophan biosynthesis; L-tryptophan from chorismate: step 4/5. The sequence is that of Indole-3-glycerol phosphate synthase from Burkholderia pseudomallei (strain 1106a).